The sequence spans 296 residues: Fructose-bisphosphate aldolase class 1 (296 aa).

The active-site Proton acceptor is the glutamate 175. Catalysis depends on lysine 212, which acts as the Schiff-base intermediate with dihydroxyacetone-P.

The protein belongs to the class I fructose-bisphosphate aldolase family.

It carries out the reaction beta-D-fructose 1,6-bisphosphate = D-glyceraldehyde 3-phosphate + dihydroxyacetone phosphate. The protein operates within carbohydrate degradation; glycolysis; D-glyceraldehyde 3-phosphate and glycerone phosphate from D-glucose: step 4/4. The sequence is that of Fructose-bisphosphate aldolase class 1 (fda) from Staphylococcus epidermidis (strain ATCC 12228 / FDA PCI 1200).